We begin with the raw amino-acid sequence, 227 residues long: Cytochrome c oxidase subunit 2 (227 aa).

Over Met1–Ser14 the chain is Mitochondrial intermembrane. The helical transmembrane segment at Pro15–Thr45 threads the bilayer. Over Leu46 to Gln59 the chain is Mitochondrial matrix. A helical membrane pass occupies residues Glu60–Thr87. The Mitochondrial intermembrane segment spans residues Asp88–Leu227. Cu cation-binding residues include His161, Cys196, Glu198, Cys200, His204, and Met207. Glu198 contacts Mg(2+).

It belongs to the cytochrome c oxidase subunit 2 family. In terms of assembly, component of the cytochrome c oxidase (complex IV, CIV), a multisubunit enzyme composed of 14 subunits. The complex is composed of a catalytic core of 3 subunits MT-CO1, MT-CO2 and MT-CO3, encoded in the mitochondrial DNA, and 11 supernumerary subunits COX4I, COX5A, COX5B, COX6A, COX6B, COX6C, COX7A, COX7B, COX7C, COX8 and NDUFA4, which are encoded in the nuclear genome. The complex exists as a monomer or a dimer and forms supercomplexes (SCs) in the inner mitochondrial membrane with NADH-ubiquinone oxidoreductase (complex I, CI) and ubiquinol-cytochrome c oxidoreductase (cytochrome b-c1 complex, complex III, CIII), resulting in different assemblies (supercomplex SCI(1)III(2)IV(1) and megacomplex MCI(2)III(2)IV(2)). Found in a complex with TMEM177, COA6, COX18, COX20, SCO1 and SCO2. Interacts with TMEM177 in a COX20-dependent manner. Interacts with COX20. Interacts with COX16. Requires Cu cation as cofactor.

Its subcellular location is the mitochondrion inner membrane. The enzyme catalyses 4 Fe(II)-[cytochrome c] + O2 + 8 H(+)(in) = 4 Fe(III)-[cytochrome c] + 2 H2O + 4 H(+)(out). In terms of biological role, component of the cytochrome c oxidase, the last enzyme in the mitochondrial electron transport chain which drives oxidative phosphorylation. The respiratory chain contains 3 multisubunit complexes succinate dehydrogenase (complex II, CII), ubiquinol-cytochrome c oxidoreductase (cytochrome b-c1 complex, complex III, CIII) and cytochrome c oxidase (complex IV, CIV), that cooperate to transfer electrons derived from NADH and succinate to molecular oxygen, creating an electrochemical gradient over the inner membrane that drives transmembrane transport and the ATP synthase. Cytochrome c oxidase is the component of the respiratory chain that catalyzes the reduction of oxygen to water. Electrons originating from reduced cytochrome c in the intermembrane space (IMS) are transferred via the dinuclear copper A center (CU(A)) of subunit 2 and heme A of subunit 1 to the active site in subunit 1, a binuclear center (BNC) formed by heme A3 and copper B (CU(B)). The BNC reduces molecular oxygen to 2 water molecules using 4 electrons from cytochrome c in the IMS and 4 protons from the mitochondrial matrix. This Hylobates lar (Lar gibbon) protein is Cytochrome c oxidase subunit 2 (MT-CO2).